The following is a 658-amino-acid chain: Glycogen debranching enzyme (658 aa).

Asp336 acts as the Nucleophile in catalysis. Glu371 acts as the Proton donor in catalysis. Residues 460-484 (ANGEENRDGSNNNHSNNHGKEGLGG) form a disordered region.

The protein belongs to the glycosyl hydrolase 13 family.

The catalysed reaction is Hydrolysis of (1-&gt;6)-alpha-D-glucosidic linkages to branches with degrees of polymerization of three or four glucose residues in limit dextrin.. It participates in glycan degradation; glycogen degradation. Removes maltotriose and maltotetraose chains that are attached by 1,6-alpha-linkage to the limit dextrin main chain, generating a debranched limit dextrin. This is Glycogen debranching enzyme from Escherichia fergusonii (strain ATCC 35469 / DSM 13698 / CCUG 18766 / IAM 14443 / JCM 21226 / LMG 7866 / NBRC 102419 / NCTC 12128 / CDC 0568-73).